Reading from the N-terminus, the 172-residue chain is Large ribosomal subunit protein uL10 (172 aa).

Belongs to the universal ribosomal protein uL10 family. Part of the ribosomal stalk of the 50S ribosomal subunit. The N-terminus interacts with L11 and the large rRNA to form the base of the stalk. The C-terminus forms an elongated spine to which L12 dimers bind in a sequential fashion forming a multimeric L10(L12)X complex.

In terms of biological role, forms part of the ribosomal stalk, playing a central role in the interaction of the ribosome with GTP-bound translation factors. The polypeptide is Large ribosomal subunit protein uL10 (Ruegeria sp. (strain TM1040) (Silicibacter sp.)).